The primary structure comprises 667 residues: UvrABC system protein B (667 aa).

One can recognise a Helicase ATP-binding domain in the interval 31 to 414 (AGIESGEKEQ…EMDRTKHVVQ (384 aa)). An ATP-binding site is contributed by 44–51 (GATGTGKT). The Beta-hairpin motif lies at 97 to 120 (YYDYYQPEAYVPSSDTYIEKDSAI). Residues 435 to 597 (QIDDLVGEIN…ITPHTIKKAI (163 aa)) enclose the Helicase C-terminal domain. In terms of domain architecture, UVR spans 630 to 665 (LDMISKLEEQMKTAAKKLDFEQAATLRDTVMELKAQ).

Belongs to the UvrB family. Forms a heterotetramer with UvrA during the search for lesions. Interacts with UvrC in an incision complex.

Its subcellular location is the cytoplasm. Functionally, the UvrABC repair system catalyzes the recognition and processing of DNA lesions. A damage recognition complex composed of 2 UvrA and 2 UvrB subunits scans DNA for abnormalities. Upon binding of the UvrA(2)B(2) complex to a putative damaged site, the DNA wraps around one UvrB monomer. DNA wrap is dependent on ATP binding by UvrB and probably causes local melting of the DNA helix, facilitating insertion of UvrB beta-hairpin between the DNA strands. Then UvrB probes one DNA strand for the presence of a lesion. If a lesion is found the UvrA subunits dissociate and the UvrB-DNA preincision complex is formed. This complex is subsequently bound by UvrC and the second UvrB is released. If no lesion is found, the DNA wraps around the other UvrB subunit that will check the other stand for damage. The sequence is that of UvrABC system protein B from Lactiplantibacillus plantarum (strain ATCC BAA-793 / NCIMB 8826 / WCFS1) (Lactobacillus plantarum).